Here is a 520-residue protein sequence, read N- to C-terminus: Dual specificity tyrosine-phosphorylation-regulated kinase 4 (520 aa).

The tract at residues 1 to 32 is disordered; that stretch reads MPASELKASEIPFHPSIKTQDPKAEEKSPKKQ. A Bipartite nuclear localization signal motif is present at residues 19–37; it reads TQDPKAEEKSPKKQKVTLT. Over residues 20 to 29 the composition is skewed to basic and acidic residues; it reads QDPKAEEKSP. The Protein kinase domain maps to 104–400; it reads YEVLETIGKG…PDQALKHAWI (297 aa). Residues 110 to 118, K133, and 183 to 186 each bind ATP; these read IGKGSFGQV and FELL. D230 acts as the Proton acceptor in catalysis. Y264 carries the phosphotyrosine; by autocatalysis modification. The disordered stretch occupies residues 404-467; that stretch reads RNLKPQPRPQ…KHVQHSGDQQ (64 aa). Residues 439–457 are compositionally biased toward basic and acidic residues; it reads RKADEITKETTEKTKDSPT.

Belongs to the protein kinase superfamily. CMGC Ser/Thr protein kinase family. MNB/DYRK subfamily. Requires Mg(2+) as cofactor. Autophosphorylation on Tyr-264 in the activation loop is required for kinase activity.

Its subcellular location is the cytoplasm. It localises to the nucleus. It catalyses the reaction L-seryl-[protein] + ATP = O-phospho-L-seryl-[protein] + ADP + H(+). The catalysed reaction is L-threonyl-[protein] + ATP = O-phospho-L-threonyl-[protein] + ADP + H(+). It carries out the reaction L-tyrosyl-[protein] + ATP = O-phospho-L-tyrosyl-[protein] + ADP + H(+). In terms of biological role, possible non-essential role in spermiogenesis. The protein is Dual specificity tyrosine-phosphorylation-regulated kinase 4 (DYRK4) of Homo sapiens (Human).